We begin with the raw amino-acid sequence, 192 residues long: NOP protein chaperone 1 (192 aa).

A compositionally biased stretch (low complexity) spans 1–26; that stretch reads MEVSGESHSGPSCSSSSRDGSGVSVS. The disordered stretch occupies residues 1–39; that stretch reads MEVSGESHSGPSCSSSSRDGSGVSVSKELLMAGSGGRGG. Residues serine 34 and serine 66 each carry the phosphoserine modification. The disordered stretch occupies residues 118 to 192; sequence FEMNQSHSKE…SENKEKQENK (75 aa). A compositionally biased stretch (acidic residues) spans 129–152; it reads DSSEENSQDSSEESSESEDEDDST. Over residues 164-177 the composition is skewed to basic and acidic residues; it reads KLPHSEDGKGKIEV. Serine 180 carries the phosphoserine modification.

In terms of assembly, interacts with NOP58, RUVBL1 and RUVBL2; the interactions are direct and NOPCHAP1 bridges the association of NOP58 with RUVBL1:RUVBL2 even in absence of snoRNAs. The interactions with RUVBL1 and RUVBL2 are disrupted upon ATP binding.

Its subcellular location is the nucleus. Functionally, client-loading PAQosome/R2TP complex cofactor that selects NOP58 to promote box C/D small nucleolar ribonucleoprotein (snoRNP) assembly. Acts as a bridge between NOP58 and the R2TP complex via RUVBL1:RUVBL2. In Bos taurus (Bovine), this protein is NOP protein chaperone 1 (NOPCHAP1).